A 407-amino-acid chain; its full sequence is Argininosuccinate synthase (407 aa).

ATP contacts are provided by residues 16 to 24 and alanine 44; that span reads AYSGGLDTS. L-citrulline contacts are provided by tyrosine 96 and serine 101. Glycine 126 provides a ligand contact to ATP. Residues threonine 128, asparagine 132, and aspartate 133 each coordinate L-aspartate. Asparagine 132 is a binding site for L-citrulline. 5 residues coordinate L-citrulline: arginine 136, serine 185, serine 194, glutamate 270, and tyrosine 282.

Belongs to the argininosuccinate synthase family. Type 1 subfamily. Homotetramer.

The protein resides in the cytoplasm. The enzyme catalyses L-citrulline + L-aspartate + ATP = 2-(N(omega)-L-arginino)succinate + AMP + diphosphate + H(+). It participates in amino-acid biosynthesis; L-arginine biosynthesis; L-arginine from L-ornithine and carbamoyl phosphate: step 2/3. In Shewanella loihica (strain ATCC BAA-1088 / PV-4), this protein is Argininosuccinate synthase.